A 343-amino-acid polypeptide reads, in one-letter code: Probable dual-specificity RNA methyltransferase RlmN (343 aa).

The Proton acceptor role is filled by Glu93. The Radical SAM core domain occupies Thr99 to Arg320. A disulfide bond links Cys106 and Cys331. Cys113, Cys117, and Cys120 together coordinate [4Fe-4S] cluster. Residues Gly158–Glu159, Ser190, Ser212–His214, and His288 contribute to the S-adenosyl-L-methionine site. Cys331 (S-methylcysteine intermediate) is an active-site residue.

It belongs to the radical SAM superfamily. RlmN family. The cofactor is [4Fe-4S] cluster.

The protein localises to the cytoplasm. It catalyses the reaction adenosine(2503) in 23S rRNA + 2 reduced [2Fe-2S]-[ferredoxin] + 2 S-adenosyl-L-methionine = 2-methyladenosine(2503) in 23S rRNA + 5'-deoxyadenosine + L-methionine + 2 oxidized [2Fe-2S]-[ferredoxin] + S-adenosyl-L-homocysteine. The enzyme catalyses adenosine(37) in tRNA + 2 reduced [2Fe-2S]-[ferredoxin] + 2 S-adenosyl-L-methionine = 2-methyladenosine(37) in tRNA + 5'-deoxyadenosine + L-methionine + 2 oxidized [2Fe-2S]-[ferredoxin] + S-adenosyl-L-homocysteine. Functionally, specifically methylates position 2 of adenine 2503 in 23S rRNA and position 2 of adenine 37 in tRNAs. The chain is Probable dual-specificity RNA methyltransferase RlmN from Parabacteroides distasonis (strain ATCC 8503 / DSM 20701 / CIP 104284 / JCM 5825 / NCTC 11152).